Reading from the N-terminus, the 256-residue chain is Ciliary microtubule associated protein 1A (256 aa).

3 STPGR repeats span residues 66–92 (PGPGYLVPSNITVKGKDGTPAYSIYGR), 181–206 (PGPGTYRVIDPGSYKHRPPQYSMTAR), and 217–242 (PGPGAYSPEKVVMSRPQAPNFSFGIR).

This sequence belongs to the CIMAP family.

The protein resides in the cytoplasm. It localises to the cytoskeleton. Its subcellular location is the flagellum axoneme. In terms of biological role, outer dense fibers are filamentous structures located on the outside of the axoneme in the midpiece and principal piece of the mammalian sperm tail. May help to maintain the passive elastic structures and elastic recoil of the sperm tail. The protein is Ciliary microtubule associated protein 1A (cimap1a) of Xenopus tropicalis (Western clawed frog).